Here is a 1462-residue protein sequence, read N- to C-terminus: uncharacterized protein (1462 aa).

A helical membrane pass occupies residues 119 to 139; that stretch reads TGYITSLCLSAILKFFSFRII. Serine 411 and serine 420 each carry phosphoserine. The 190-residue stretch at 541 to 730 folds into the SEC7 domain; sequence TLIESKKRKA…SEIYKAIKEN (190 aa). An HEAT repeat occupies 1102–1139; the sequence is ENSEDWGLFSKLCNLLNDKNIVVRNQSLSLFHQLVNKY.

The protein localises to the cytoplasm. Its subcellular location is the golgi apparatus membrane. This is an uncharacterized protein from Schizosaccharomyces pombe (strain 972 / ATCC 24843) (Fission yeast).